Reading from the N-terminus, the 211-residue chain is Ras-related protein RABB1c (211 aa).

Ser2 bears the N-acetylserine mark. Gly13–Cys21 contacts GTP. The Effector region motif lies at His35 to Phe43. GTP contacts are provided by residues Asp61–Gln65, Asn119–Asp122, and Ser149–Lys151. S-geranylgeranyl cysteine attachment occurs at residues Cys209 and Cys210.

The protein belongs to the small GTPase superfamily. Rab family.

It localises to the cell membrane. Its function is as follows. Intracellular vesicle trafficking and protein transport. This is Ras-related protein RABB1c (RABB1C) from Arabidopsis thaliana (Mouse-ear cress).